The sequence spans 291 residues: Potassium-transporting ATPase subunit beta (291 aa).

Topologically, residues 1-36 are cytoplasmic; sequence MAALQEKKTCGQRMEEFQRYCWNPDTGQMLGRTLSR. The chain crosses the membrane as a helical; Signal-anchor for type II membrane protein span at residues 37–57; it reads WVWISLYYVAFYVVMTGLFAL. Residues 58-291 are Extracellular-facing; it reads CLYVLMQTVD…KVEFKLKIEK (234 aa). Residues N99, N103, N130, N146, and N161 are each glycosylated (N-linked (GlcNAc...) asparagine). C131 and C152 are disulfide-bonded. C162 and C178 are disulfide-bonded. Residues N193 and N222 are each glycosylated (N-linked (GlcNAc...) asparagine). The immunoglobulin-like stretch occupies residues 194-291; that stretch reads GSAPRVDCAF…KVEFKLKIEK (98 aa). C201 and C263 form a disulfide bridge.

The protein belongs to the X(+)/potassium ATPases subunit beta family. In terms of assembly, the ATPase pump is composed of two subunits: alpha (catalytic) and beta (regulatory). Interacts with alpha subunit ATP12A; this interaction is required for the formation of a functionally active pump and targeting at the plasma membrane. Interacts (via N-terminus) with alpha subunit ATP4A (via the P-domain). N-glycosylation is necessary for assembly and functional expression of the pump at the plasma membrane.

The protein resides in the apical cell membrane. Its subcellular location is the cell membrane. Its function is as follows. The beta subunit of the gastric H(+)/K(+) ATPase pump which transports H(+) ions in exchange for K(+) ions across the apical membrane of parietal cells. Plays a structural and regulatory role in the assembly and membrane targeting of a functionally active pump. Within a transport cycle, the transfer of a H(+) ion across the membrane is coupled to ATP hydrolysis and is associated with a transient phosphorylation of the alpha subunit that shifts the pump conformation from inward-facing (E1) to outward-facing state (E2). Interacts with the phosphorylation domain of the alpha subunit and functions as a ratchet, stabilizing the lumenal-open E2 conformation and preventing the reverse reaction of the transport cycle. This Homo sapiens (Human) protein is Potassium-transporting ATPase subunit beta.